The sequence spans 86 residues: Photosystem I reaction center subunit PsaK (86 aa).

Residues 15–34 (PWSTQVAMVMITCNLLAIVA) traverse the membrane as a helical segment.

Belongs to the PsaG/PsaK family.

The protein resides in the plastid. It localises to the chloroplast thylakoid membrane. This chain is Photosystem I reaction center subunit PsaK, found in Pyropia yezoensis (Susabi-nori).